Consider the following 134-residue polypeptide: Large ribosomal subunit protein eL27 (134 aa).

The region spanning 5–40 (LKSGKVVVVLSGRFAGKKAVIVRNFDDGTSSRPYGH) is the KOW domain.

This sequence belongs to the eukaryotic ribosomal protein eL27 family.

The polypeptide is Large ribosomal subunit protein eL27 (RPL27) (Pyrobotrys stellatus (Green alga)).